Consider the following 263-residue polypeptide: (R)-S-adenosyl-L-methionine hydrolase (263 aa).

Adenosine is bound by residues Asp18, Asp82, and Asn181. 5 residues coordinate (R)-S-adenosyl-L-methionine: Asn181, Tyr221, Ser234, Glu239, and Met244.

The protein belongs to the SAM hydrolase / SAM-dependent halogenase family. As to quaternary structure, homotrimer.

The enzyme catalyses (R)-S-adenosyl-L-methionine + H2O = adenosine + L-methionine + H(+). Functionally, catalyzes the hydrolysis of S-adenosyl-L-methionine (SAM) into adenosine and L-methionine. Does not have chlorinase or fluorinase activity. This is (R)-S-adenosyl-L-methionine hydrolase from Methanocaldococcus jannaschii (strain ATCC 43067 / DSM 2661 / JAL-1 / JCM 10045 / NBRC 100440) (Methanococcus jannaschii).